Consider the following 315-residue polypeptide: Methionine import ATP-binding protein MetN (315 aa).

Residues 2–219 form the ABC transporter domain; the sequence is IEIEKVCVDF…PQHAFTQQLV (218 aa). 16 to 23 contributes to the ATP binding site; the sequence is GTSGAGKS.

The protein belongs to the ABC transporter superfamily. Methionine importer (TC 3.A.1.24) family. As to quaternary structure, the complex is composed of two ATP-binding proteins (MetN), two transmembrane proteins (MetI) and a solute-binding protein (MetQ).

It is found in the cell inner membrane. The enzyme catalyses L-methionine(out) + ATP + H2O = L-methionine(in) + ADP + phosphate + H(+). It carries out the reaction D-methionine(out) + ATP + H2O = D-methionine(in) + ADP + phosphate + H(+). Part of the ABC transporter complex MetNIQ involved in methionine import. Responsible for energy coupling to the transport system. In Salmonella enteritidis, this protein is Methionine import ATP-binding protein MetN.